The sequence spans 782 residues: Ribosome biogenesis protein ERB1 (782 aa).

Positions 1–11 (MSVNSRKRKVA) are enriched in basic residues. The segment at 1–120 (MSVNSRKRKV…LEGEEDESLK (120 aa)) is disordered. Composition is skewed to acidic residues over residues 39–51 (DESE…EDTD) and 59–75 (LSDE…DEAE). Residues 82–92 (RNLNTSGGSQQ) are compositionally biased toward polar residues. Over residues 106 to 117 (GADGELEGEEDE) the composition is skewed to acidic residues. 2 WD repeats span residues 432–471 (GQEG…QVWN) and 475–516 (SDEE…PDVE). The interval 533–556 (KPSTAANGEAPKQSPGKWSRPGSR) is disordered. WD repeat units lie at residues 612-652 (RLKG…KILQ), 653-692 (PGAK…KPYK), 696-736 (FHKE…DLME), and 752-782 (KSRL…RLWN).

It belongs to the WD repeat BOP1/ERB1 family. As to quaternary structure, component of the NOP7 complex, composed of ERB1, NOP7 and YTM1. The complex is held together by ERB1, which interacts with NOP7 via its N-terminal domain and with YTM1 via a high-affinity interaction between the seven-bladed beta-propeller domains of the 2 proteins. The NOP7 complex associates with the 66S pre-ribosome.

The protein localises to the nucleus. It is found in the nucleolus. It localises to the nucleoplasm. Its function is as follows. Component of the NOP7 complex, which is required for maturation of the 25S and 5.8S ribosomal RNAs and formation of the 60S ribosome. The protein is Ribosome biogenesis protein ERB1 of Phaeosphaeria nodorum (strain SN15 / ATCC MYA-4574 / FGSC 10173) (Glume blotch fungus).